The primary structure comprises 318 residues: NADH-ubiquinone oxidoreductase chain 1 (318 aa).

8 consecutive transmembrane segments (helical) span residues 2 to 22, 69 to 89, 102 to 122, 147 to 167, 172 to 192, 231 to 251, 253 to 273, and 294 to 314; these read LLTNILCLMMPILLAVAFLTL, LMFIIAPTLAFTLALSLWAPL, ILFILAMSSLAVHSILWSGWA, AIILLSIMLINGSFTLSTLTI, MWLILPTWPLAMMWFISTLAE, IILMNALTATLFFGAFHNPLF, ELHTINLTTKTLILVFLFLWI, and LPLTLALCTWHMTMPISLAGI.

Belongs to the complex I subunit 1 family.

The protein resides in the mitochondrion inner membrane. It catalyses the reaction a ubiquinone + NADH + 5 H(+)(in) = a ubiquinol + NAD(+) + 4 H(+)(out). In terms of biological role, core subunit of the mitochondrial membrane respiratory chain NADH dehydrogenase (Complex I) that is believed to belong to the minimal assembly required for catalysis. Complex I functions in the transfer of electrons from NADH to the respiratory chain. The immediate electron acceptor for the enzyme is believed to be ubiquinone. The chain is NADH-ubiquinone oxidoreductase chain 1 (MT-ND1) from Bradypus variegatus (Brown-throated three-fingered sloth).